Reading from the N-terminus, the 348-residue chain is Enkurin domain-containing protein 1 (348 aa).

Disordered regions lie at residues 1–65 (MCEG…RPGG), 84–195 (GGIS…PSAK), and 262–282 (AEAR…TRMP). Ser-93 carries the phosphoserine modification. Residues 95–127 (KRKDPKDHEKENMRRIREIQRRFREQEHSREQG) show a composition bias toward basic and acidic residues. Ser-138 is subject to Phosphoserine. Residues 139 to 148 (PKYDKVESRV) show a composition bias toward basic and acidic residues. The region spanning 253-345 (ERRDLWRREA…IFSRPKVFVK (93 aa)) is the Enkurin domain.

As to quaternary structure, interacts with alpha-tubulin. Interacts (via central region) with CCP110 (via N-terminal region); competes with CEP97 for binding to CCP110.

It is found in the cytoplasm. It localises to the cytoskeleton. The protein resides in the microtubule organizing center. The protein localises to the centrosome. Its subcellular location is the centriole. It is found in the cilium basal body. It localises to the cell projection. The protein resides in the cilium. The protein localises to the spindle. Its subcellular location is the spindle pole. It is found in the cilium axoneme. Its function is as follows. Microtubule-binding protein which regulates microtubule organization and stability. Promotes the stability of astral microtubules and facilitates the proper orientation of the mitotic spindle. This allows the oriented division of basal keratinocytes and contributes to epidermal stratification. Required for the assembly of both primary and motile cilia. Destabilizes the interaction between CCP110 and CEP97 by competing with CEP97 for binding to CCP110 which promotes the removal of CCP110 and CEP97 from the mother centriole and allows the initiation of ciliogenesis. In Bos taurus (Bovine), this protein is Enkurin domain-containing protein 1 (ENKD1).